A 98-amino-acid polypeptide reads, in one-letter code: Large ribosomal subunit protein eL21 (98 aa).

It belongs to the eukaryotic ribosomal protein eL21 family.

The sequence is that of Large ribosomal subunit protein eL21 from Korarchaeum cryptofilum (strain OPF8).